A 520-amino-acid chain; its full sequence is Maturase K (520 aa).

This sequence belongs to the intron maturase 2 family. MatK subfamily.

Its subcellular location is the plastid. The protein resides in the chloroplast. In terms of biological role, usually encoded in the trnK tRNA gene intron. Probably assists in splicing its own and other chloroplast group II introns. The chain is Maturase K from Liriope muscari (Big blue lilyturf).